A 206-amino-acid polypeptide reads, in one-letter code: Large ribosomal subunit protein uL4 (206 aa).

A disordered region spans residues 46–89; that stretch reads GNRAQKTRAEVKHSTKKPWRQKGTGRARSGMTSSPLWRKGGRAF. The segment covering 59 to 70 has biased composition (basic residues); that stretch reads STKKPWRQKGTG.

It belongs to the universal ribosomal protein uL4 family. Part of the 50S ribosomal subunit.

One of the primary rRNA binding proteins, this protein initially binds near the 5'-end of the 23S rRNA. It is important during the early stages of 50S assembly. It makes multiple contacts with different domains of the 23S rRNA in the assembled 50S subunit and ribosome. Its function is as follows. Forms part of the polypeptide exit tunnel. The sequence is that of Large ribosomal subunit protein uL4 from Neisseria gonorrhoeae (strain NCCP11945).